Reading from the N-terminus, the 291-residue chain is N-acetylmannosamine kinase (291 aa).

Residues 5–12 and 132–139 each bind ATP; these read AIDIGGTK and GVGGGVVC. Residues H156, C166, C168, and C173 each coordinate Zn(2+).

It belongs to the ROK (NagC/XylR) family. NanK subfamily. As to quaternary structure, homodimer.

It catalyses the reaction an N-acyl-D-mannosamine + ATP = an N-acyl-D-mannosamine 6-phosphate + ADP + H(+). Its pathway is amino-sugar metabolism; N-acetylneuraminate degradation; D-fructose 6-phosphate from N-acetylneuraminate: step 2/5. Its function is as follows. Catalyzes the phosphorylation of N-acetylmannosamine (ManNAc) to ManNAc-6-P. The sequence is that of N-acetylmannosamine kinase from Salmonella agona (strain SL483).